The sequence spans 408 residues: 1-deoxy-D-xylulose 5-phosphate reductoisomerase (408 aa).

NADPH contacts are provided by T27, G28, S29, I30, A53, R54, N55, and N140. 1-deoxy-D-xylulose 5-phosphate is bound at residue K141. E142 provides a ligand contact to NADPH. D166 serves as a coordination point for Mn(2+). The 1-deoxy-D-xylulose 5-phosphate site is built by S167, E168, S192, and H215. A Mn(2+)-binding site is contributed by E168. G221 contributes to the NADPH binding site. The 1-deoxy-D-xylulose 5-phosphate site is built by S228, N233, K234, and E237. E237 provides a ligand contact to Mn(2+).

Belongs to the DXR family. Mg(2+) serves as cofactor. Requires Mn(2+) as cofactor.

It carries out the reaction 2-C-methyl-D-erythritol 4-phosphate + NADP(+) = 1-deoxy-D-xylulose 5-phosphate + NADPH + H(+). The protein operates within isoprenoid biosynthesis; isopentenyl diphosphate biosynthesis via DXP pathway; isopentenyl diphosphate from 1-deoxy-D-xylulose 5-phosphate: step 1/6. Catalyzes the NADPH-dependent rearrangement and reduction of 1-deoxy-D-xylulose-5-phosphate (DXP) to 2-C-methyl-D-erythritol 4-phosphate (MEP). This Nitratidesulfovibrio vulgaris (strain ATCC 29579 / DSM 644 / CCUG 34227 / NCIMB 8303 / VKM B-1760 / Hildenborough) (Desulfovibrio vulgaris) protein is 1-deoxy-D-xylulose 5-phosphate reductoisomerase.